The primary structure comprises 290 residues: Poly-beta-1,6-N-acetyl-D-glucosamine N-deacetylase (290 aa).

An N-terminal signal peptide occupies residues 1–28 (MKYRKLIILVLSILIILPVSTLDGHHIA). The region spanning 114-290 (RSVWINFDDM…KRWDGFHEKD (177 aa)) is the NodB homology domain.

It belongs to the polysaccharide deacetylase family.

It localises to the secreted. The protein resides in the cell wall. Catalyzes the N-deacetylation of poly-beta-1,6-N-acetyl-D-glucosamine (PNAG, also referred to as PIA), a biofilm adhesin polysaccharide. N-deacetylation is crucial for attachment of the polysaccharide to the bacterial cell surface; it leads to the introduction of positive charges in the otherwise neutral PIA polymer, allowing electrostatic interactions. The chain is Poly-beta-1,6-N-acetyl-D-glucosamine N-deacetylase (icaB) from Staphylococcus aureus (strain MRSA252).